Here is an 855-residue protein sequence, read N- to C-terminus: MPWTLQPKWLAGKGLPLLGAILLRKTEKSEPQWKHRRQETHPYYDLQVKVLRARNIQHTDKLSKADCYVRLWLPTASVSPSQTRTVVNSSDPEWNETFPYQIHGAVKNVLELALYDEDVLDSDNVFSILFDTSTLQLGQPCTKNFTRQQDPKELEVEFTLEKSQTPASEVVTNGVLVAHPCLRIQGTVTGDKTASLGELGSRQIQLAVPGAYEKPQPLQPTSEPGLPVNFTFHVNPVLSPKLHIKLQEQLQVFHSGPSDELEAQTSKMDKASILLSSLPLNEELTKLVDLEEGQQVSLRMKADMSSSGDLDLRLGFDLCDGEQEFLDKRKQVASKALQRVMGLSEALHCDQVPVVAVLGSGGGTRAMTSLYGSLAGLQELGLLDAVTYLSGVSGSSWCISTLYRDPSWSQKALQGPIKYASERVCSSKIGMLSPKQFEYYSREKRAWESRGHSMSFTDLWGLIIEYFLNQEENPAKLSDQQETVSQGQNPYPIYASINVHKNISGDDFAEWCEFTPYEVGFPKYGAYVPTELFGSEFFMGRLLHFWPEPRICYLQGMWGSAFAASLYEIFLKLGGLSLSFLDWHRGSVSVTDDWPKLRKQDPTRLPTRLFTPMSSFSQAVLDIFTSRITCAQTFNFTRGLCMYKDYTARKDFVVSEDAWHSHNYGYPDACPNQLTPMKDFLSLVDGGFAINSPFPLVLQPQRAVDLIVSFDYSLEGPFEVLQVTEKYCRDRGIPFPRIEVDPKDSEDPRECYLFAEAEDPCSPIVLHFPLVNRTFRTHLAPGVERQTAEEKAFGDFIINGPDTAYGMMDFTYEPKEFDRLVTLSRYNVLNNKETIRHALQLALDRRRQAGGRVGG.

The region spanning 27 to 145 (EKSEPQWKHR…QLGQPCTKNF (119 aa)) is the C2 domain. Residues Asp-60, Asp-66, Asp-116, Asp-118, and Asp-123 each coordinate Ca(2+). Positions 304-855 (MSSSGDLDLR…RRQAGGRVGG (552 aa)) constitute a PLA2c domain. The Nucleophile role is filled by Ser-393. Asp-685 (proton acceptor) is an active-site residue.

Ca(2+) is required as a cofactor. In terms of tissue distribution, strongly expressed in thyroid, expressed at intermediate level in stomach and at very low level in large intestine and prostate.

It localises to the cytoplasm. It is found in the cytosol. Its subcellular location is the cell membrane. The protein resides in the mitochondrion. It catalyses the reaction a 1,2-diacyl-sn-glycero-3-phosphocholine + H2O = a 1-acyl-sn-glycero-3-phosphocholine + a fatty acid + H(+). The enzyme catalyses a 1-O-alkyl-2-acyl-sn-glycero-3-phosphocholine + H2O = a 1-O-alkyl-sn-glycero-3-phosphocholine + a fatty acid + H(+). The catalysed reaction is 1-hexadecanoyl-2-(9Z-octadecenoyl)-sn-glycero-3-phosphocholine + H2O = 2-(9Z-octadecenoyl)-sn-glycero-3-phosphocholine + hexadecanoate + H(+). It carries out the reaction 1-hexadecanoyl-2-(9Z,12Z-octadecadienoyl)-sn-glycero-3-phosphocholine + H2O = (9Z,12Z)-octadecadienoate + 1-hexadecanoyl-sn-glycero-3-phosphocholine + H(+). It catalyses the reaction 1-hexadecanoyl-2-(5Z,8Z,11Z,14Z-eicosatetraenoyl)-sn-glycero-3-phosphocholine + H2O = 1-hexadecanoyl-sn-glycero-3-phosphocholine + (5Z,8Z,11Z,14Z)-eicosatetraenoate + H(+). The enzyme catalyses 1-hexadecanoyl-2-(9Z,12Z-octadecadienoyl)-sn-glycero-3-phosphoethanolamine + H2O = 1-hexadecanoyl-sn-glycero-3-phosphoethanolamine + (9Z,12Z)-octadecadienoate + H(+). The catalysed reaction is 1-hexadecanoyl-2-(5Z,8Z,11Z,14Z-eicosatetraenoyl)-sn-glycero-3-phosphoethanolamine + H2O = 1-hexadecanoyl-sn-glycero-3-phosphoethanolamine + (5Z,8Z,11Z,14Z)-eicosatetraenoate + H(+). It carries out the reaction 1-(5Z,8Z,11Z,14Z-eicosatetraenoyl)-2-O-hexadecyl-sn-glycero-3-phosphocholine + H2O = 2-O-hexadecyl-sn-glycero-3-phosphocholine + (5Z,8Z,11Z,14Z)-eicosatetraenoate + H(+). It catalyses the reaction 1-O-hexadecyl-2-(5Z,8Z,11Z,14Z)-eicosatetraenoyl-sn-glycero-3-phosphocholine + H2O = 1-O-hexadecyl-sn-glycero-3-phosphocholine + (5Z,8Z,11Z,14Z)-eicosatetraenoate + H(+). The enzyme catalyses 1-hexadecanoyl-sn-glycero-3-phosphocholine + H2O = sn-glycerol 3-phosphocholine + hexadecanoate + H(+). With respect to regulation, stimulated by cytosolic Ca(2+). Functionally, has calcium-dependent phospholipase and lysophospholipase activities with a potential role in membrane lipid remodeling and biosynthesis of lipid mediators. Preferentially hydrolyzes the ester bond of the fatty acyl group attached at sn-2 position of phospholipids (phospholipase A2 activity). Selectively hydrolyzes sn-2 arachidonoyl group from membrane phospholipids, providing the precursor for eicosanoid biosynthesis. In myocardial mitochondria, plays a major role in arachidonate release that is metabolically channeled to the formation of cardioprotective eicosanoids, epoxyeicosatrienoates (EETs). The protein is Cytosolic phospholipase A2 zeta (Pla2g4f) of Mus musculus (Mouse).